A 164-amino-acid chain; its full sequence is Transcription elongation factor GreA (164 aa).

Belongs to the GreA/GreB family.

Its function is as follows. Necessary for efficient RNA polymerase transcription elongation past template-encoded arresting sites. The arresting sites in DNA have the property of trapping a certain fraction of elongating RNA polymerases that pass through, resulting in locked ternary complexes. Cleavage of the nascent transcript by cleavage factors such as GreA or GreB allows the resumption of elongation from the new 3'terminus. GreA releases sequences of 2 to 3 nucleotides. The polypeptide is Transcription elongation factor GreA (Helicobacter pylori (strain J99 / ATCC 700824) (Campylobacter pylori J99)).